The following is a 257-amino-acid chain: Zinc import ATP-binding protein ZnuC (257 aa).

One can recognise an ABC transporter domain in the interval 5 to 220 (VELQSVTVTF…PSYVALFGQQ (216 aa)). 37–44 (GPNGAGKS) provides a ligand contact to ATP. The disordered stretch occupies residues 234–257 (HEHDLAGSPVGPCQHNKQHGHDNA).

The protein belongs to the ABC transporter superfamily. Zinc importer (TC 3.A.1.15.5) family. The complex is composed of two ATP-binding proteins (ZnuC), two transmembrane proteins (ZnuB) and a solute-binding protein (ZnuA).

It is found in the cell inner membrane. It catalyses the reaction Zn(2+)(out) + ATP(in) + H2O(in) = Zn(2+)(in) + ADP(in) + phosphate(in) + H(+)(in). Its function is as follows. Part of the ABC transporter complex ZnuABC involved in zinc import. Responsible for energy coupling to the transport system. The chain is Zinc import ATP-binding protein ZnuC from Photobacterium profundum (strain SS9).